The chain runs to 454 residues: Notoamide E oxidase notB (454 aa).

Residues 15-35 (SPAELTVIIVGLGIAGLTAAI) traverse the membrane as a helical segment. FAD is bound by residues E48 and G61. Residue N75 is glycosylated (N-linked (GlcNAc...) asparagine). R121 contacts FAD. Active-site residues include R199 and Y229. FAD is bound by residues D322 and G335.

Belongs to the paxM FAD-dependent monooxygenase family. FAD is required as a cofactor.

The protein localises to the membrane. It carries out the reaction notoamide E + NADPH + O2 + H(+) = notoamide C + NADP(+) + H2O. The enzyme catalyses notoamide E + NADPH + O2 + H(+) = notoamide D + NADP(+) + H2O. Its pathway is alkaloid biosynthesis. FAD-dependent monooxygenase; part of the gene cluster that mediates the biosynthesis of notoamide, a fungal indole alkaloid that belongs to a family of natural products containing a characteristic bicyclo[2.2.2]diazaoctane core. The first step of notoamide biosynthesis involves coupling of L-proline and L-tryptophan by the bimodular NRPS notE, to produce cyclo-L-tryptophan-L-proline called brevianamide F. The reverse prenyltransferase notF then acts as a deoxybrevianamide E synthase and converts brevianamide F to deoxybrevianamide E via reverse prenylation at C-2 of the indole ring leading to the bicyclo[2.2.2]diazaoctane core. Deoxybrevianamide E is further hydroxylated at C-6 of the indole ring, likely catalyzed by the cytochrome P450 monooxygenase notG, to yield 6-hydroxy-deoxybrevianamide E. 6-hydroxy-deoxybrevianamide E is a specific substrate of the prenyltransferase notC for normal prenylation at C-7 to produce 6-hydroxy-7-prenyl-deoxybrevianamide, also called notoamide S. As the proposed pivotal branching point in notoamide biosynthesis, notoamide S can be diverted to notoamide E through an oxidative pyran ring closure putatively catalyzed by either notH cytochrome P450 monooxygenase or the notD FAD-linked oxidoreductase. This step would be followed by an indole 2,3-epoxidation-initiated pinacol-like rearrangement catalyzed by the notB FAD-dependent monooxygenase leading to the formation of notoamide C and notoamide D. On the other hand notoamide S is converted to notoamide T by notH (or notD), a bifunctional oxidase that also functions as the intramolecular Diels-Alderase responsible for generation of (+)-notoamide T. To generate antipodal (-)-notoaminide T, notH' (or notD') in Aspergillus versicolor is expected to catalyze a Diels-Alder reaction leading to the opposite stereochemistry. The remaining oxidoreductase notD (or notH) likely catalyzes the oxidative pyran ring formation to yield (+)-stephacidin A. The FAD-dependent monooxygenase notI is highly similar to notB and is predicted to catalyze a similar conversion from (+)-stephacidin A to (-)-notoamide B via the 2,3-epoxidation of (+)-stephacidin A followed by a pinacol-type rearrangement. Finally, it remains unclear which enzyme could be responsible for the final hydroxylation steps leading to notoamide A and sclerotiamide. This Aspergillus sp. (strain MF297-2) protein is Notoamide E oxidase notB.